The sequence spans 763 residues: C6 finger domain transcription factor hasF (763 aa).

Residues 1-20 (MDSTTSSSRFSVSSPQSGPS) show a composition bias toward low complexity. The disordered stretch occupies residues 1–25 (MDSTTSSSRFSVSSPQSGPSAGIQK). A DNA-binding region (zn(2)-C6 fungal-type) is located at residues 34–61 (CLTCRRRKVKCDHAQPVCTPCQRGGRVC). 3 disordered regions span residues 68–91 (PVSQ…RSGQ), 112–145 (GGNM…PKCE), and 189–219 (DQSS…ESLT). Polar residues predominate over residues 80-89 (SRVSRTNLRS). The segment covering 197–209 (DSPPSDQPTPPFP) has biased composition (pro residues).

The protein localises to the nucleus. Its function is as follows. Transcription factor; part of the gene cluster that mediates the biosynthesis of hexadehydro-astechrome (HAS), a tryptophan-derived iron(III)-complex that acts as a virulence factor in infected mice. Does not regulate the expression of the HAS biosynthetic genes (at least under the growth conditions tested). This is C6 finger domain transcription factor hasF from Aspergillus fumigatus (strain CBS 144.89 / FGSC A1163 / CEA10) (Neosartorya fumigata).